The sequence spans 191 residues: Phospholipase A2-delta (191 aa).

Residues 1–25 form the signal peptide; it reads MIRGGALTHVALGLTVFLLLAVVHS. 6 disulfide bridges follow: Cys-29–Cys-56, Cys-33–Cys-62, Cys-38–Cys-115, Cys-49–Cys-69, Cys-68–Cys-93, and Cys-75–Cys-86. Tyr-48, Gly-50, and Tyr-53 together coordinate Ca(2+). His-72 is a catalytic residue. Asp-73 provides a ligand contact to Ca(2+). The segment at 161-191 is disordered; it reads KADTKDGLGTNQGPQTKDGSKVSVPMNPSPS.

The protein belongs to the phospholipase A2 family. Requires Ca(2+) as cofactor. In terms of tissue distribution, specifically expressed in flowers but at a low level. Detected specifically in the pollen.

The protein resides in the secreted. The protein localises to the endoplasmic reticulum. It catalyses the reaction a 1,2-diacyl-sn-glycero-3-phosphocholine + H2O = a 1-acyl-sn-glycero-3-phosphocholine + a fatty acid + H(+). In terms of biological role, PA2 catalyzes the calcium-dependent hydrolysis of the 2-acyl groups in 3-sn-phosphoglycerides. Releases lysophospholipids (LPLs) and free fatty acids (FFAs) from membrane phospholipids in response to hormones and other external stimuli. Plays a role in pollen development and germination and tube growth. The polypeptide is Phospholipase A2-delta (PLA2-DELTA) (Arabidopsis thaliana (Mouse-ear cress)).